The chain runs to 709 residues: DNA topoisomerase 1 (709 aa).

The region spanning 3–127 (KNLVVIESPN…KCKRITFNEI (125 aa)) is the Toprim domain. 2 residues coordinate Mg(2+): Glu9 and Asp95. One can recognise a Topo IA-type catalytic domain in the interval 143-598 (DLNWVESQFA…FWTNFKSDVK (456 aa)). An interaction with DNA region spans residues 176 to 181 (SAGRVQ). Tyr334 acts as the O-(5'-phospho-DNA)-tyrosine intermediate in catalysis. C4-type zinc fingers lie at residues 618–646 (CPKCNQPLVYRYTKRGNEKFVGCSDFPKC) and 667–696 (CPECNNKLVKRRTKFNAKKTFIGCSNFPNC).

The protein belongs to the type IA topoisomerase family. In terms of assembly, monomer. Mg(2+) is required as a cofactor.

The catalysed reaction is ATP-independent breakage of single-stranded DNA, followed by passage and rejoining.. Functionally, releases the supercoiling and torsional tension of DNA, which is introduced during the DNA replication and transcription, by transiently cleaving and rejoining one strand of the DNA duplex. Introduces a single-strand break via transesterification at a target site in duplex DNA. The scissile phosphodiester is attacked by the catalytic tyrosine of the enzyme, resulting in the formation of a DNA-(5'-phosphotyrosyl)-enzyme intermediate and the expulsion of a 3'-OH DNA strand. The free DNA strand then undergoes passage around the unbroken strand, thus removing DNA supercoils. Finally, in the religation step, the DNA 3'-OH attacks the covalent intermediate to expel the active-site tyrosine and restore the DNA phosphodiester backbone. This Mycoplasma genitalium (strain ATCC 33530 / DSM 19775 / NCTC 10195 / G37) (Mycoplasmoides genitalium) protein is DNA topoisomerase 1.